The following is a 320-amino-acid chain: MIACRMSSQDLSITAKLINGGIAGLVGVTCVFPIDLAKTRLQNQQGKDVYKGMTDCLVKTARAEGFLGMYRGAAVNLTLVTPEKAIKLAANDFLRQLLMQDGTQRNLKMEMLAGCGAGICQVVITCPMEMLKIQLQDAGRLAVCQQASASATPTSRPYSTGSTSTHRRPSATLIAWELLRTQGLSGLYRGLGATLLRDIPFSIIYFPLFANLNQLGVSELTGKASFTHSFVAGCAAGSVSAVAVTPLDVLKTRIQTLKKGLGEDTYRGVTDCARKLWTQEGAAAFMKGAGCRALVIAPLFGIAQGVYFIGIGERILKCFE.

Solcar repeat units follow at residues leucine 11–leucine 97, arginine 105–leucine 215, and alanine 224–glutamate 313. 3 consecutive transmembrane segments (helical) span residues leucine 17–alanine 37, phenylalanine 66–isoleucine 86, and methionine 111–leucine 131. Residue serine 150 is modified to Phosphoserine. The next 3 helical transmembrane spans lie at glycine 190–alanine 210, phenylalanine 230–leucine 250, and alanine 293–glutamate 313.

Belongs to the mitochondrial carrier (TC 2.A.29) family.

Its subcellular location is the mitochondrion inner membrane. It carries out the reaction L-glutamate(in) + H(+)(in) = L-glutamate(out) + H(+)(out). Functionally, responsible for the transport of glutamate from the cytosol into the mitochondrial matrix with the concomitant import of a proton (symport system). The protein is Mitochondrial glutamate carrier 2 (Slc25a18) of Rattus norvegicus (Rat).